A 490-amino-acid chain; its full sequence is Ketol-acid reductoisomerase (NADP(+)) (490 aa).

In terms of domain architecture, KARI N-terminal Rossmann spans 16–207 (INKCRFMKKE…GGHRAGVLES (192 aa)). NADP(+) is bound by residues 44–47 (CGAQ), K67, S77, and 107–109 (DKQ). H131 is an active-site residue. Position 157 (G157) interacts with NADP(+). 2 consecutive KARI C-terminal knotted domains span residues 208 to 343 (SFIA…TAPV) and 344 to 483 (YNEK…MKKM). Mg(2+) is bound by residues D216, E220, E388, and E392. Residue S413 participates in substrate binding.

This sequence belongs to the ketol-acid reductoisomerase family. It depends on Mg(2+) as a cofactor.

It carries out the reaction (2R)-2,3-dihydroxy-3-methylbutanoate + NADP(+) = (2S)-2-acetolactate + NADPH + H(+). The catalysed reaction is (2R,3R)-2,3-dihydroxy-3-methylpentanoate + NADP(+) = (S)-2-ethyl-2-hydroxy-3-oxobutanoate + NADPH + H(+). The protein operates within amino-acid biosynthesis; L-isoleucine biosynthesis; L-isoleucine from 2-oxobutanoate: step 2/4. It participates in amino-acid biosynthesis; L-valine biosynthesis; L-valine from pyruvate: step 2/4. Its function is as follows. Involved in the biosynthesis of branched-chain amino acids (BCAA). Catalyzes an alkyl-migration followed by a ketol-acid reduction of (S)-2-acetolactate (S2AL) to yield (R)-2,3-dihydroxy-isovalerate. In the isomerase reaction, S2AL is rearranged via a Mg-dependent methyl migration to produce 3-hydroxy-3-methyl-2-ketobutyrate (HMKB). In the reductase reaction, this 2-ketoacid undergoes a metal-dependent reduction by NADPH to yield (R)-2,3-dihydroxy-isovalerate. The sequence is that of Ketol-acid reductoisomerase (NADP(+)) from Buchnera aphidicola subsp. Acyrthosiphon pisum (strain 5A).